Consider the following 701-residue polypeptide: Polyribonucleotide nucleotidyltransferase (701 aa).

Mg(2+) contacts are provided by Asp-487 and Asp-493. Residues 554-613 enclose the KH domain; the sequence is PTMIAMKIDTDKIRDVIGKGGATIRAICEETKASIDIEDDGSIKIFGETKEAADAAKQRI. Residues 623–691 form the S1 motif domain; the sequence is GKIYVGKVER…NRGRIKLSIK (69 aa).

The protein belongs to the polyribonucleotide nucleotidyltransferase family. In terms of assembly, component of the RNA degradosome, which is a multiprotein complex involved in RNA processing and mRNA degradation. The cofactor is Mg(2+).

The protein localises to the cytoplasm. The catalysed reaction is RNA(n+1) + phosphate = RNA(n) + a ribonucleoside 5'-diphosphate. In terms of biological role, involved in mRNA degradation. Catalyzes the phosphorolysis of single-stranded polyribonucleotides processively in the 3'- to 5'-direction. This is Polyribonucleotide nucleotidyltransferase from Pseudomonas putida (Arthrobacter siderocapsulatus).